Consider the following 155-residue polypeptide: MRLRLIAVGSRMPKWVEEGWHEYAKRLPAELSLELVEIPLNTRGKNADVARLIRQEGEAMLSKVQPGERIVTLEVHGKPWSTEQLATELDRWRLDARTVNLMVGGPEGLAPEVCARAEQRWSLSPLTLPHPLVRILIGEQIYRAWTVLSGHPYHK.

Residues L73, G104, and 123 to 128 (LSPLTL) each bind S-adenosyl-L-methionine.

The protein belongs to the RNA methyltransferase RlmH family. Homodimer.

The protein resides in the cytoplasm. It carries out the reaction pseudouridine(1915) in 23S rRNA + S-adenosyl-L-methionine = N(3)-methylpseudouridine(1915) in 23S rRNA + S-adenosyl-L-homocysteine + H(+). Specifically methylates the pseudouridine at position 1915 (m3Psi1915) in 23S rRNA. The polypeptide is Ribosomal RNA large subunit methyltransferase H (Pseudomonas putida (strain ATCC 700007 / DSM 6899 / JCM 31910 / BCRC 17059 / LMG 24140 / F1)).